The primary structure comprises 236 residues: Sugar fermentation stimulation protein homolog (236 aa).

This sequence belongs to the SfsA family.

The polypeptide is Sugar fermentation stimulation protein homolog (Desulfotalea psychrophila (strain LSv54 / DSM 12343)).